A 250-amino-acid polypeptide reads, in one-letter code: 5-oxoprolinase subunit A (250 aa).

The protein belongs to the LamB/PxpA family. As to quaternary structure, forms a complex composed of PxpA, PxpB and PxpC.

The catalysed reaction is 5-oxo-L-proline + ATP + 2 H2O = L-glutamate + ADP + phosphate + H(+). Functionally, catalyzes the cleavage of 5-oxoproline to form L-glutamate coupled to the hydrolysis of ATP to ADP and inorganic phosphate. The protein is 5-oxoprolinase subunit A of Klebsiella pneumoniae (strain 342).